A 438-amino-acid chain; its full sequence is Aspartate--tRNA(Asp/Asn) ligase (438 aa).

Residue Glu-176 coordinates L-aspartate. The segment at 198 to 201 (QLYK) is aspartate. Arg-220 is a binding site for L-aspartate. Residues 220-222 (RAE), 228-230 (RHL), and Glu-361 contribute to the ATP site. Positions 361 and 364 each coordinate Mg(2+). 2 residues coordinate L-aspartate: Ser-364 and Arg-368. Residue 409-412 (GADR) participates in ATP binding.

It belongs to the class-II aminoacyl-tRNA synthetase family. Type 2 subfamily. As to quaternary structure, homodimer. Mg(2+) is required as a cofactor.

The protein localises to the cytoplasm. The enzyme catalyses tRNA(Asx) + L-aspartate + ATP = L-aspartyl-tRNA(Asx) + AMP + diphosphate. Functionally, aspartyl-tRNA synthetase with relaxed tRNA specificity since it is able to aspartylate not only its cognate tRNA(Asp) but also tRNA(Asn). Reaction proceeds in two steps: L-aspartate is first activated by ATP to form Asp-AMP and then transferred to the acceptor end of tRNA(Asp/Asn). The chain is Aspartate--tRNA(Asp/Asn) ligase from Methanococcus maripaludis (strain C5 / ATCC BAA-1333).